We begin with the raw amino-acid sequence, 58 residues long: Large ribosomal subunit protein uL30 (58 aa).

Belongs to the universal ribosomal protein uL30 family. As to quaternary structure, part of the 50S ribosomal subunit.

The protein is Large ribosomal subunit protein uL30 of Buchnera aphidicola subsp. Baizongia pistaciae (strain Bp).